The primary structure comprises 189 residues: Adenylate kinase (189 aa).

11–16 (GSGKGT) contributes to the ATP binding site. Positions 31–60 (STGDVLRAEIKNGTELGKTAKGYIDQGQLI) are NMP. Residues T32, R37, 58–60 (QLI), 86–89 (GFPR), and Q93 contribute to the AMP site. Residues 127–137 (KRGKESGRADD) are LID. R128 is a binding site for ATP. AMP is bound by residues R134 and R145. Residue G173 participates in ATP binding.

This sequence belongs to the adenylate kinase family. In terms of assembly, monomer.

It localises to the cytoplasm. The enzyme catalyses AMP + ATP = 2 ADP. It participates in purine metabolism; AMP biosynthesis via salvage pathway; AMP from ADP: step 1/1. In terms of biological role, catalyzes the reversible transfer of the terminal phosphate group between ATP and AMP. Plays an important role in cellular energy homeostasis and in adenine nucleotide metabolism. This Bacteroides fragilis (strain ATCC 25285 / DSM 2151 / CCUG 4856 / JCM 11019 / LMG 10263 / NCTC 9343 / Onslow / VPI 2553 / EN-2) protein is Adenylate kinase.